The following is a 353-amino-acid chain: uncharacterized protein (353 aa).

This sequence belongs to the MG067/MG068/MG395 family.

This is an uncharacterized protein from Mycoplasma pneumoniae (strain ATCC 29342 / M129 / Subtype 1) (Mycoplasmoides pneumoniae).